Reading from the N-terminus, the 217-residue chain is Small ribosomal subunit protein uS3c (217 aa).

Residues 43 to 117 (IKNYVQKNRK…KLNIAITRIA (75 aa)) enclose the KH type-2 domain.

This sequence belongs to the universal ribosomal protein uS3 family. In terms of assembly, part of the 30S ribosomal subunit.

The protein localises to the plastid. The protein resides in the chloroplast. The protein is Small ribosomal subunit protein uS3c (rps3) of Ranunculus macranthus (Large buttercup).